The following is a 186-amino-acid chain: Interferon beta-3 (186 aa).

A signal peptide spans 1–21; the sequence is MTYRCLLPMVLLLCFSTTALS. Cysteines 52 and 161 form a disulfide. 2 N-linked (GlcNAc...) asparagine glycosylation sites follow: asparagine 131 and asparagine 173.

This sequence belongs to the alpha/beta interferon family. As to quaternary structure, monomer.

It is found in the secreted. In terms of biological role, has antiviral, antibacterial and anticancer activities. The chain is Interferon beta-3 (IFNB3) from Bos taurus (Bovine).